Consider the following 240-residue polypeptide: UDP-2,3-diacylglucosamine hydrolase (240 aa).

Residues D8, H10, D41, N79, and H114 each contribute to the Mn(2+) site. Residue 79–80 (NR) participates in substrate binding. Residues D122, S160, N164, K167, and H195 each contribute to the substrate site. H195 and H197 together coordinate Mn(2+).

It belongs to the LpxH family. The cofactor is Mn(2+).

It is found in the cell inner membrane. The catalysed reaction is UDP-2-N,3-O-bis[(3R)-3-hydroxytetradecanoyl]-alpha-D-glucosamine + H2O = 2-N,3-O-bis[(3R)-3-hydroxytetradecanoyl]-alpha-D-glucosaminyl 1-phosphate + UMP + 2 H(+). The protein operates within glycolipid biosynthesis; lipid IV(A) biosynthesis; lipid IV(A) from (3R)-3-hydroxytetradecanoyl-[acyl-carrier-protein] and UDP-N-acetyl-alpha-D-glucosamine: step 4/6. Its function is as follows. Hydrolyzes the pyrophosphate bond of UDP-2,3-diacylglucosamine to yield 2,3-diacylglucosamine 1-phosphate (lipid X) and UMP by catalyzing the attack of water at the alpha-P atom. Involved in the biosynthesis of lipid A, a phosphorylated glycolipid that anchors the lipopolysaccharide to the outer membrane of the cell. This chain is UDP-2,3-diacylglucosamine hydrolase, found in Salmonella paratyphi A (strain ATCC 9150 / SARB42).